Here is a 394-residue protein sequence, read N- to C-terminus: Stabilizer of axonemal microtubules 2 (394 aa).

6 mn regions span residues 110 to 122, 144 to 158, 244 to 256, 278 to 292, 312 to 324, and 346 to 360; these read STTFQDDYVPQEI, DTSHRRDYVPHQLEV, NSTSHLDYVPYQA, KSTTKEDFPAWEICR, LSTFRSHFVPHEL, and VTMYSIQFTPKKQEI.

This sequence belongs to the FAM154 family.

The polypeptide is Stabilizer of axonemal microtubules 2 (Saxo2) (Mus musculus (Mouse)).